We begin with the raw amino-acid sequence, 637 residues long: Threonine--tRNA ligase (637 aa).

Residues 1–61 (MIKITLKDGK…NEDSTLEILT (61 aa)) form the TGS domain. Positions 242 to 532 (DHRKLGKELG…LTEHYAGAFP (291 aa)) are catalytic. Residues C333, H384, and H509 each coordinate Zn(2+).

This sequence belongs to the class-II aminoacyl-tRNA synthetase family. As to quaternary structure, homodimer. Requires Zn(2+) as cofactor.

The protein resides in the cytoplasm. The catalysed reaction is tRNA(Thr) + L-threonine + ATP = L-threonyl-tRNA(Thr) + AMP + diphosphate + H(+). Functionally, catalyzes the attachment of threonine to tRNA(Thr) in a two-step reaction: L-threonine is first activated by ATP to form Thr-AMP and then transferred to the acceptor end of tRNA(Thr). Also edits incorrectly charged L-seryl-tRNA(Thr). The polypeptide is Threonine--tRNA ligase (Clostridium novyi (strain NT)).